The chain runs to 147 residues: Lysozyme C (147 aa).

The signal sequence occupies residues 1-18 (MKVLLLLGFIFCSMAAHG). Positions 19 to 147 (KRMERCEFAR…LSKYLEGCHL (129 aa)) constitute a C-type lysozyme domain. Cystine bridges form between Cys-24/Cys-145, Cys-48/Cys-133, Cys-83/Cys-99, and Cys-95/Cys-113. Active-site residues include Glu-53 and Asp-71.

It belongs to the glycosyl hydrolase 22 family. In terms of assembly, monomer.

It localises to the secreted. It carries out the reaction Hydrolysis of (1-&gt;4)-beta-linkages between N-acetylmuramic acid and N-acetyl-D-glucosamine residues in a peptidoglycan and between N-acetyl-D-glucosamine residues in chitodextrins.. Lysozymes have primarily a bacteriolytic function; those in tissues and body fluids are associated with the monocyte-macrophage system and enhance the activity of immunoagents. This is Lysozyme C (LYZ) from Trichosurus vulpecula (Brush-tailed possum).